The chain runs to 347 residues: Spermatogenesis associated 6-like protein (347 aa).

The disordered stretch occupies residues serine 115–lysine 199. Residues lysine 116–threonine 125 are compositionally biased toward polar residues. A compositionally biased stretch (basic residues) spans leucine 153 to serine 166. Residues proline 170–aspartate 183 are compositionally biased toward basic and acidic residues. Phosphoserine occurs at positions 218 and 221. The segment at glutamate 234 to proline 285 is disordered. The segment covering proline 254 to arginine 277 has biased composition (polar residues).

Belongs to the SPATA6 family.

This Mus musculus (Mouse) protein is Spermatogenesis associated 6-like protein (Spata6l).